The sequence spans 85 residues: Putative septation protein SpoVG (85 aa).

This sequence belongs to the SpoVG family.

Could be involved in septation. This Archaeoglobus fulgidus (strain ATCC 49558 / DSM 4304 / JCM 9628 / NBRC 100126 / VC-16) protein is Putative septation protein SpoVG.